The primary structure comprises 168 residues: Disulfide bond formation protein B 1 (168 aa).

The Cytoplasmic portion of the chain corresponds to 1–14 (MNELTSRLNRERRF). Residues 15 to 31 (LVLLGVICLALIGGALY) traverse the membrane as a helical segment. Topologically, residues 32–49 (MQVVLGEAPCPLCILQRY) are periplasmic. A disulfide bond links cysteine 41 and cysteine 44. The chain crosses the membrane as a helical span at residues 50 to 65 (ALLFIAIFAFIAAAMP). Over 66–72 (GRKSLTF) the chain is Cytoplasmic. Residues 73-89 (FEVLVVLSAIGGIVAAG) traverse the membrane as a helical segment. Over 90–144 (NHVYILANPMVSCGIDTLQPIVDDLPLAKLWPLAFQVDGFCSTPYPPILGLSLAQ) the chain is Periplasmic. Cysteine 102 and cysteine 130 form a disulfide bridge. A helical transmembrane segment spans residues 145–163 (WALVAFVLTTVLVPLGIYR). Topologically, residues 164–168 (NRRRG) are cytoplasmic.

Belongs to the DsbB family.

It localises to the cell inner membrane. Its function is as follows. Required for disulfide bond formation in some periplasmic proteins. Acts by oxidizing the DsbA protein. This chain is Disulfide bond formation protein B 1, found in Pseudomonas entomophila (strain L48).